Consider the following 248-residue polypeptide: PF03932 family protein CutC (248 aa).

Belongs to the CutC family. In terms of assembly, homodimer.

The protein localises to the cytoplasm. The chain is PF03932 family protein CutC from Escherichia coli O81 (strain ED1a).